Consider the following 346-residue polypeptide: Uroporphyrinogen decarboxylase (346 aa).

Substrate-binding positions include 26-30, Phe-45, Asp-76, Tyr-153, Ser-208, and His-323; that span reads RQAGR.

This sequence belongs to the uroporphyrinogen decarboxylase family. In terms of assembly, homodimer.

The protein resides in the cytoplasm. The enzyme catalyses uroporphyrinogen III + 4 H(+) = coproporphyrinogen III + 4 CO2. The protein operates within porphyrin-containing compound metabolism; protoporphyrin-IX biosynthesis; coproporphyrinogen-III from 5-aminolevulinate: step 4/4. Catalyzes the decarboxylation of four acetate groups of uroporphyrinogen-III to yield coproporphyrinogen-III. The protein is Uroporphyrinogen decarboxylase of Prochlorococcus marinus subsp. pastoris (strain CCMP1986 / NIES-2087 / MED4).